We begin with the raw amino-acid sequence, 335 residues long: Putative hydrogenase expression/formation protein MJ0676 (335 aa).

The protein belongs to the HypE family.

The sequence is that of Putative hydrogenase expression/formation protein MJ0676 from Methanocaldococcus jannaschii (strain ATCC 43067 / DSM 2661 / JAL-1 / JCM 10045 / NBRC 100440) (Methanococcus jannaschii).